The sequence spans 470 residues: uncharacterized protein (470 aa).

Residues 439–470 (SIKSSKSKKQLKSSKSKKPIKHTKTKNIYVET) form a disordered region. A compositionally biased stretch (basic residues) spans 443–463 (SKSKKQLKSSKSKKPIKHTKT).

This is an uncharacterized protein from Acanthamoeba polyphaga mimivirus (APMV).